Consider the following 269-residue polypeptide: Energy-coupling factor transporter ATP-binding protein EcfA1 (269 aa).

An ABC transporter domain is found at 8 to 242 (IEFKDVSFQY…EEALISVGLD (235 aa)). 42-49 (GHNGSGKS) lines the ATP pocket.

This sequence belongs to the ABC transporter superfamily. Energy-coupling factor EcfA family. Forms a stable energy-coupling factor (ECF) transporter complex composed of 2 membrane-embedded substrate-binding proteins (S component), 2 ATP-binding proteins (A component) and 2 transmembrane proteins (T component).

The protein localises to the cell membrane. ATP-binding (A) component of a common energy-coupling factor (ECF) ABC-transporter complex. Unlike classic ABC transporters this ECF transporter provides the energy necessary to transport a number of different substrates. The sequence is that of Energy-coupling factor transporter ATP-binding protein EcfA1 from Staphylococcus epidermidis (strain ATCC 35984 / DSM 28319 / BCRC 17069 / CCUG 31568 / BM 3577 / RP62A).